The following is a 741-amino-acid chain: NAD(P)H-quinone oxidoreductase subunit 5, chloroplastic (741 aa).

The next 16 helical transmembrane spans lie at 9–29 (WIIPFLPLPVPMLIGLGLLLF), 40–60 (WAFQSVLLLSIVMIFSMNLSI), 89–109 (IDPLTSIMSILITTVGIMVLI), 125–145 (FAYMSFFSTSMLGLVTSSNLI), 147–167 (IYIFWELVGMCSYLLIGFWFT), 185–205 (GDFGLLLGILGFYWITGSFEF), 219–239 (NEVNFLFVTLCAVLLFAGAIA), 258–278 (TPISALIHAATMVAAGIFLVA), 283–303 (LFIVIPHIMNFISLIGIITVF), 327–347 (LGYMMLALGMGSYRSALFHLI), 354–374 (ALLFLGSGSVIHSMETLVGYC), 396–416 (NSFLLGTLSLCGIPPLACFWS), 425–445 (WLYSPIFAIIAWSTAGLTAFY), 549–569 (LFPILILILFTLFVGFLGIPF), 605–625 (VFSVSIASFGIFIAFFLYKPV), and 718–738 (ISSYLFFYFSYVSIFLLIYYF).

The protein belongs to the complex I subunit 5 family. NDH is composed of at least 16 different subunits, 5 of which are encoded in the nucleus.

The protein localises to the plastid. It localises to the chloroplast thylakoid membrane. It carries out the reaction a plastoquinone + NADH + (n+1) H(+)(in) = a plastoquinol + NAD(+) + n H(+)(out). The catalysed reaction is a plastoquinone + NADPH + (n+1) H(+)(in) = a plastoquinol + NADP(+) + n H(+)(out). Functionally, NDH shuttles electrons from NAD(P)H:plastoquinone, via FMN and iron-sulfur (Fe-S) centers, to quinones in the photosynthetic chain and possibly in a chloroplast respiratory chain. The immediate electron acceptor for the enzyme in this species is believed to be plastoquinone. Couples the redox reaction to proton translocation, and thus conserves the redox energy in a proton gradient. The chain is NAD(P)H-quinone oxidoreductase subunit 5, chloroplastic (ndhF) from Athroisma gracile.